A 382-amino-acid polypeptide reads, in one-letter code: Ferredoxin--NADP reductase, root isozyme 2, chloroplastic (382 aa).

The transit peptide at 1–64 directs the protein to the chloroplast; that stretch reads MSHSAVSQAG…DGKRYPSTTI (64 aa). The 129-residue stretch at 97 to 225 folds into the FAD-binding FR-type domain; that stretch reads KESYTAKIVS…TGPSGKVMLL (129 aa). Cysteines 200 and 205 form a disulfide. Residue Ser201 is modified to Phosphoserine. At Thr233 the chain carries Phosphothreonine. 235–253 contacts NADP(+); sequence IMIATGTGVAPYRGYLRRM.

This sequence belongs to the ferredoxin--NADP reductase type 1 family. Requires FAD as cofactor. As to expression, expressed in shoots and roots. More abundant in roots than RFNR1.

It is found in the plastid. The protein localises to the chloroplast. The enzyme catalyses 2 reduced [2Fe-2S]-[ferredoxin] + NADP(+) + H(+) = 2 oxidized [2Fe-2S]-[ferredoxin] + NADPH. Functionally, maintains the supply of reduced ferredoxin under non-photosynthetic conditions. The sequence is that of Ferredoxin--NADP reductase, root isozyme 2, chloroplastic (RFNR2) from Arabidopsis thaliana (Mouse-ear cress).